Consider the following 423-residue polypeptide: Serine hydroxymethyltransferase (423 aa).

121-123 (GHI) serves as a coordination point for (6S)-5,6,7,8-tetrahydrofolate. N6-(pyridoxal phosphate)lysine is present on lysine 227. Residue glutamate 242 coordinates (6S)-5,6,7,8-tetrahydrofolate.

The protein belongs to the SHMT family. As to quaternary structure, homodimer. Pyridoxal 5'-phosphate is required as a cofactor.

The protein localises to the cytoplasm. The catalysed reaction is 5,10-methylenetetrahydromethanopterin + glycine + H2O = 5,6,7,8-tetrahydromethanopterin + L-serine. Its pathway is amino-acid biosynthesis; glycine biosynthesis; glycine from L-serine: step 1/1. Catalyzes the reversible interconversion of serine and glycine with tetrahydromethanopterin (H4MPT) serving as the one-carbon carrier. Also exhibits a pteridine-independent aldolase activity toward beta-hydroxyamino acids, producing glycine and aldehydes, via a retro-aldol mechanism. This Methanothermobacter marburgensis (strain ATCC BAA-927 / DSM 2133 / JCM 14651 / NBRC 100331 / OCM 82 / Marburg) (Methanobacterium thermoautotrophicum) protein is Serine hydroxymethyltransferase.